A 932-amino-acid polypeptide reads, in one-letter code: Phosphoenolpyruvate carboxylase (932 aa).

Residues histidine 164 and lysine 594 contribute to the active site.

This sequence belongs to the PEPCase type 1 family. The cofactor is Mg(2+).

It catalyses the reaction oxaloacetate + phosphate = phosphoenolpyruvate + hydrogencarbonate. Functionally, forms oxaloacetate, a four-carbon dicarboxylic acid source for the tricarboxylic acid cycle. In Bradyrhizobium diazoefficiens (strain JCM 10833 / BCRC 13528 / IAM 13628 / NBRC 14792 / USDA 110), this protein is Phosphoenolpyruvate carboxylase.